Consider the following 733-residue polypeptide: Ferric aerobactin receptor (733 aa).

A signal peptide spans 1 to 25 (MMISKKYTLWALNPLLLTMMAPAVA). Residues 31-38 (ETFVVSAN) carry the TonB box motif. Residues 43 to 153 (TVAEMAQTTW…TGGLINIVTK (111 aa)) enclose the TBDR plug domain. The region spanning 158 to 733 (ETIMEFEAGT…TFGLNYSVLF (576 aa)) is the TBDR beta-barrel domain. Residues 716–733 (YDYKGRGRTFGLNYSVLF) carry the TonB C-terminal box motif.

This sequence belongs to the TonB-dependent receptor family.

It is found in the cell outer membrane. Receptor for aerobactin. This Klebsiella pneumoniae protein is Ferric aerobactin receptor (iutA).